The primary structure comprises 1132 residues: Ubiquitin-associated protein 2 (1132 aa).

The disordered stretch occupies residues 1 to 29 (MMTSVSNDRCRGAREKPQMPTAHAAQSQK). Residues 8–17 (DRCRGAREKP) are compositionally biased toward basic and acidic residues. The region spanning 48 to 92 (KNDSDFEAKVKQLMEVTGKNQDECIVALHDCNGDVNKAINILLEG) is the UBA domain. 10 disordered regions span residues 95-202 (DTTS…YSES), 221-248 (GTDE…YGLK), 331-351 (NNQM…SPQS), 380-479 (LKPP…STVS), 602-679 (TSSA…VSTL), 713-749 (PLSQ…VEST), 875-919 (PYSG…LNPG), 996-1033 (GGYG…GSVY), 1040-1059 (DKQG…SALG), and 1087-1132 (PHSQ…YWTN). A compositionally biased stretch (basic and acidic residues) spans 109 to 130 (FGRESSENKENREKRTEREASR). Position 166 is an omega-N-methylarginine (Arg-166). Residues 168–182 (KRARGRGFGRGRGRG) are compositionally biased toward basic residues. Polar residues-rich tracts occupy residues 233-244 (HSMSQEPPSKSS) and 331-340 (NNQMAPGTAN). Residues 341–351 (STSASSYSPQS) are compositionally biased toward low complexity. Residues 392 to 404 (SSAQQNDTASPPA) show a composition bias toward polar residues. Phosphoserine is present on residues Ser-433 and Ser-440. Low complexity-rich tracts occupy residues 436–448 (LSQL…HQTQ) and 602–618 (TSSA…SSSY). A compositionally biased stretch (polar residues) spans 619 to 630 (DQSSVHTRIAYQ). A Phosphoserine modification is found at Ser-631. Residues 631–644 (SSASPPDSAPGSVA) show a composition bias toward low complexity. A compositionally biased stretch (polar residues) spans 652 to 662 (SQHTVDTTSSV). A compositionally biased stretch (low complexity) spans 713–722 (PLSQLSSSLS). Residues 723-742 (GHQNSMTSAHATRSTSTPHT) show a composition bias toward polar residues. Over residues 897-914 (PAQAQQSQSQTHHTAQQP) the composition is skewed to low complexity. Low complexity predominate over residues 1101 to 1115 (PSGSGQRSQPSSLQP). The span at 1116-1132 (KSQASKPTYGSAPYWTN) shows a compositional bias: polar residues.

In terms of assembly, may interact with ANXA2.

The protein resides in the nucleus. The protein localises to the chromosome. It localises to the cytoplasm. Functionally, recruits the ubiquitination machinery to RNA polymerase II for polyubiquitination, removal and degradation, when the transcription-coupled nucleotide excision repair (TC-NER) machinery fails to resolve DNA damage. May promote the degradation of ANXA2. The chain is Ubiquitin-associated protein 2 from Mus musculus (Mouse).